A 93-amino-acid chain; its full sequence is Small ribosomal subunit protein bS20 (93 aa).

Belongs to the bacterial ribosomal protein bS20 family.

Its function is as follows. Binds directly to 16S ribosomal RNA. This is Small ribosomal subunit protein bS20 from Hydrogenobaculum sp. (strain Y04AAS1).